The following is a 469-amino-acid chain: UDP-N-acetylmuramate--L-alanine ligase (469 aa).

An ATP-binding site is contributed by 113–119 (GTHGKTT).

The protein belongs to the MurCDEF family.

The protein resides in the cytoplasm. It carries out the reaction UDP-N-acetyl-alpha-D-muramate + L-alanine + ATP = UDP-N-acetyl-alpha-D-muramoyl-L-alanine + ADP + phosphate + H(+). Its pathway is cell wall biogenesis; peptidoglycan biosynthesis. In terms of biological role, cell wall formation. This is UDP-N-acetylmuramate--L-alanine ligase from Neisseria meningitidis serogroup B (strain ATCC BAA-335 / MC58).